Reading from the N-terminus, the 314-residue chain is Taste receptor type 2 member 42 (314 aa).

The Extracellular portion of the chain corresponds to 1-7 (MATELDK). Residues 8-28 (IFLILEIAEFIIGMLGNVFIG) form a helical membrane-spanning segment. At 29 to 50 (LVNCSEGIKNQKVFSADFILTC) the chain is on the cytoplasmic side. The helical transmembrane segment at 51–71 (LAISTIGQLFVILFDSFLVGL) threads the bilayer. The Extracellular segment spans residues 72 to 101 (ASHLYTTYRLGKPVIMLWHMTNHLTTWLAT). The chain crosses the membrane as a helical span at residues 102–122 (CLSIFYFFKIAHFPHSLFLWL). Over 123–127 (RWRMN) the chain is Cytoplasmic. The chain crosses the membrane as a helical span at residues 128–148 (GMIVMLLILSLFLLIFDSLVL). The Extracellular portion of the chain corresponds to 149 to 187 (EIFIDISLNIIDKSNLTLYLDESKTLYDKLSILKTLLSL). N163 carries an N-linked (GlcNAc...) asparagine glycan. Residues 188–208 (TSFIPFSLSLTSLLFFFLSLV) form a helical membrane-spanning segment. Over 209 to 238 (RHTRNLKLSSLGSRDSSTEAHRRAMKMVMS) the chain is Cytoplasmic. A helical membrane pass occupies residues 239-259 (FLFLFIVHFFSLQVANWIFFM). The Extracellular portion of the chain corresponds to 260–265 (LWNNKY). A helical transmembrane segment spans residues 266-286 (IKFAMLALNAFPSCHSFILIL). The Cytoplasmic segment spans residues 287–314 (GNSKLRQTAVRLLWHLRNYTKTPNALPL).

This sequence belongs to the G-protein coupled receptor T2R family.

Its subcellular location is the membrane. Functionally, receptor that may play a role in the perception of bitterness and is gustducin-linked. May play a role in sensing the chemical composition of the gastrointestinal content. The activity of this receptor may stimulate alpha gustducin, mediate PLC-beta-2 activation and lead to the gating of TRPM5. This is Taste receptor type 2 member 42 (TAS2R42) from Pan paniscus (Pygmy chimpanzee).